The chain runs to 950 residues: MDEENMTKSEEQQPLSLQKALQQCELVQNMIDLSISNLEGLRTKCATSNDLTQKEIRTLESKLVKYFSRQLSCKKKVALQERNAELDGFPQLRHWFRIVDVRKEVLEEISPGQLSLEDLLEMTDEQVCETVEKYGANREECARLNASLSCLRNVHMSGGNLSKQDWTIQWPTTETGKENNPVCPPEPTPWIRTHLSQSPRVPSKCVQHYCHTSPTPGAPVYTHVDRLTVDAYPGLCPPPPLESGHRSLPPSPRQRHAVRTPPRTPNIVTTVTPPGTPPMRKKNKLKPPGTPPPSSRKLIHLIPGFTALHRSKSHEFQLGHRVDEAHTPKAKKKSKPLNLKIHSSVGSCENIPSQQRSPLLSERSLRSFFVGHAPFLPSTPPVHTEANFSANTLSVPRWSPQIPRRDLGNSIKHRFSTKYWMSQTCTVCGKGMLFGLKCKNCKLKCHNKCTKEAPPCHLLIIHRGDPARLVRTESVPCDINNPLRKPPRYSDLHISQTLPKTNKINKDHIPVPYQPDSSSNPSSTTSSTPSSPAPPLPPSATPPSPLHPSPQCTRQQKNFNLPASHYYKYKQQFIFPDVVPVPETPTRAPQVILHPVTSNPILEGNPLLQIEVEPTSENEEVHDEAEESEDDFEEMNLSLLSARSFPRKASQTSIFLQEWDIPFEQLEIGELIGKGRFGQVYHGRWHGEVAIRLIDIERDNEDQLKAFKREVMAYRQTRHENVVLFMGACMSPPHLAIITSLCKGRTLYSVVRDAKIVLDVNKTRQIAQEIVKGMGYLHAKGILHKDLKSKNVFYDNGKVVITDFGLFSISGVLQAGRREDKLRIQNGWLCHLAPEIIRQLSPDTEEDKLPFSKHSDVFALGTIWYELHAREWPFKTQPAEAIIWQMGTGMKPNLSQIGMGKEISDILLFCWAFEQEERPTFTKLMDMLEKLPKRNRRLSHPGHFWKSAEL.

The interval P239 to R296 is disordered. The span at R259–P273 shows a compositional bias: low complexity. Phosphothreonine is present on residues T272 and T276. The Phorbol-ester/DAG-type zinc-finger motif lies at K412 to C456. Residues H413, C425, C428, C438, C441, H446, C449, and C456 each contribute to the Zn(2+) site. A Phosphoserine; by MARK3 modification is found at S474. T497 bears the Phosphothreonine mark. The segment at L498–Q556 is disordered. Low complexity predominate over residues S517 to S530. The span at S531–P548 shows a compositional bias: pro residues. The 266-residue stretch at L666 to L931 folds into the Protein kinase domain. I672–V680 serves as a coordination point for ATP. Catalysis depends on D786, which acts as the Proton donor/acceptor. Residues K788 and D803 each contribute to the ATP site.

This sequence belongs to the protein kinase superfamily. TKL Ser/Thr protein kinase family. As to quaternary structure, heterodimerizes (via N-terminus) with BRAF (via N-terminus) in a MAP2K1/MEK1-dependent manner. Interacts with BRAF; this increases the low intrinsic protein kinase activity of KSR2. Interacts with MAP2K1, forming a heterodimer that can dimerize to form a heterotetramer. Interacts with MAP3K8, MAPK, RAS and RAF. In terms of processing, phosphorylated on Ser-474 by MARK3. In terms of tissue distribution, mainly expressed in brain and kidney.

The protein localises to the cytoplasm. It localises to the membrane. It catalyses the reaction L-seryl-[protein] + ATP = O-phospho-L-seryl-[protein] + ADP + H(+). The enzyme catalyses L-threonyl-[protein] + ATP = O-phospho-L-threonyl-[protein] + ADP + H(+). Its activity is regulated as follows. Kinase activity is inhibited by ASC24. Functionally, location-regulated scaffold connecting MEK to RAF. Has very low protein kinase activity and can phosphorylate MAP2K1 at several Ser and Thr residues with very low efficiency (in vitro). Acts as MAP2K1/MEK1-dependent allosteric activator of BRAF; upon binding to MAP2K1/MEK1, dimerizes with BRAF and promotes BRAF-mediated phosphorylation of MAP2K1/MEK1. Interaction with BRAF enhances KSR2-mediated phosphorylation of MAP2K1 (in vitro). Blocks MAP3K8 kinase activity and MAP3K8-mediated signaling. Acts as a negative regulator of MAP3K3-mediated activation of ERK, JNK and NF-kappa-B pathways, inhibiting MAP3K3-mediated interleukin-8 production. In Homo sapiens (Human), this protein is Kinase suppressor of Ras 2.